We begin with the raw amino-acid sequence, 1439 residues long: DNA-directed RNA polymerase subunit beta' (1439 aa).

Residues Cys70, Cys72, Cys85, and Cys88 each coordinate Zn(2+). 3 residues coordinate Mg(2+): Asp504, Asp506, and Asp508. 4 residues coordinate Zn(2+): Cys862, Cys936, Cys943, and Cys946.

This sequence belongs to the RNA polymerase beta' chain family. As to quaternary structure, the RNAP catalytic core consists of 2 alpha, 1 beta, 1 beta' and 1 omega subunit. When a sigma factor is associated with the core the holoenzyme is formed, which can initiate transcription. Mg(2+) serves as cofactor. The cofactor is Zn(2+).

It carries out the reaction RNA(n) + a ribonucleoside 5'-triphosphate = RNA(n+1) + diphosphate. Functionally, DNA-dependent RNA polymerase catalyzes the transcription of DNA into RNA using the four ribonucleoside triphosphates as substrates. The protein is DNA-directed RNA polymerase subunit beta' of Gluconobacter oxydans (strain 621H) (Gluconobacter suboxydans).